A 170-amino-acid polypeptide reads, in one-letter code: MNSRGLILTLGVVIAVAFAQQDSEVEREMMKRKSAYMRFGRSDGGNPMEMEKRKSAYMRFGKRSSGGDEQELVGGDDIDMEKRKSAYMRFGKRSGPQEDDMPMEKRKSAYMRFGKRSSDMEVIGNEGVDGDAHDLFKRKSAYMRFGKRSMGEEEDHDMMKRKSAYMRFGR.

The N-terminal stretch at 1–19 (MNSRGLILTLGVVIAVAFA) is a signal peptide. At Gln-20 the chain carries Pyrrolidone carboxylic acid. Residue Phe-39 is modified to Phenylalanine amide. A propeptide spanning residues 42–51 (SDGGNPMEME) is cleaved from the precursor. Residue Phe-60 is modified to Phenylalanine amide. Positions 63–81 (RSSGGDEQELVGGDDIDME) are excised as a propeptide. Phe-90 bears the Phenylalanine amide mark. Positions 93-104 (RSGPQEDDMPME) are excised as a propeptide. Position 113 is a phenylalanine amide (Phe-113). The propeptide occupies 116–136 (RSSDMEVIGNEGVDGDAHDLF). A Phenylalanine amide modification is found at Phe-145. Positions 148–159 (RSMGEEEDHDMM) are excised as a propeptide. The interval 150-170 (MGEEEDHDMMKRKSAYMRFGR) is disordered. A compositionally biased stretch (basic residues) spans 159 to 170 (MKRKSAYMRFGR). Phenylalanine amide is present on Phe-168.

This sequence belongs to the FARP (FMRFamide related peptide) family. As to expression, each flp gene is expressed in a distinct set of neurons. Flp-6 is expressed in the ASE sensory neurons, AFD, ASG, PVT and I1 neurons.

The protein localises to the secreted. FMRFamides and FMRFamide-like peptides are neuropeptides. KSAYMRF-amide has an excitatory effect on dissected pharyngeal myogenic muscle system. This is FMRFamide-like neuropeptides 6 from Caenorhabditis elegans.